A 307-amino-acid polypeptide reads, in one-letter code: N-myc-interactor (307 aa).

The tract at residues 1-24 (MEADKDDTQQILKEHSPDEFIKDE) is disordered. Phosphoserine is present on Ser16. Lys22 participates in a covalent cross-link: Glycyl lysine isopeptide (Lys-Gly) (interchain with G-Cter in ubiquitin). A coiled-coil region spans residues 30–64 (IDEITKKNIQLKKEIQKLETELQEATKEFQIKEDI). NID domains are found at residues 103-192 (GQAL…GEVD) and 201-292 (GSAV…EVDV).

The protein belongs to the NMI family. Interacts with MYCN and MYC, as well as with other transcription factors with a Zip, HLH or a HLH-Zip motif. Interacts with all STAT proteins except STAT2. Interacts with IRF7, the interaction is direct and leads to the inhibition of IRF7-mediated type I IFN production. Interacts (via coiled-coil domain) with TRIM21 (via the SPRY domain); the interaction leads to 'Lys-63'-linked ubiquitination of NMI. Interacts with IFI35; the interaction is direct and is facilitated by TRIM21. Interacts with TLR4; the interaction is direct and leads to NF-kappa-B activation. In terms of assembly, (Microbial infection) Interacts with human cytomegalovirus protein UL23; this interaction inhibits NMI-mediated transcription of interferon-gamma stimulated genes. Ubiquitinated. 'Lys-63'-linked ubiquitination by TRIM21 promotes interaction with IFI35 and inhibits virus-triggered type I IFN-beta production. In terms of tissue distribution, expressed in adult spleen, liver, and kidney. Expressed in fetal thymus, liver, placenta, spleen, lung, and kidney but not brain. Expressed in macrophages.

It is found in the cytoplasm. It localises to the nucleus. The protein localises to the secreted. Acts as a signaling pathway regulator involved in innate immune system response. In response to interleukin 2/IL2 and interferon IFN-gamma/IFNG, interacts with signal transducer and activator of transcription/STAT which activate the transcription of downstream genes involved in a multitude of signals for development and homeostasis. Enhances the recruitment of CBP/p300 coactivators to STAT1 and STAT5, resulting in increased STAT1- and STAT5-dependent transcription. In response to interferon IFN-alpha, associates in a complex with signaling pathway regulator IFI35 to regulate immune response; the complex formation prevents proteasome-mediated degradation of IFI35. In complex with IFI35, inhibits virus-triggered type I IFN-beta production when ubiquitinated by ubiquitin-protein ligase TRIM21. In complex with IFI35, negatively regulates nuclear factor NF-kappa-B signaling by inhibiting the nuclear translocation, activation and transcription of NF-kappa-B subunit p65/RELA, resulting in the inhibition of endothelial cell proliferation, migration and re-endothelialization of injured arteries. Negatively regulates virus-triggered type I interferon/IFN production by inducing proteosome-dependent degradation of IRF7, a transcriptional regulator of type I IFN, thereby interfering with cellular antiviral responses. Beside its role as an intracellular signaling pathway regulator, also functions extracellularly as damage-associated molecular patterns (DAMPs) to promote inflammation, when actively released by macrophage to the extracellular space during cell injury or pathogen invasion. Macrophage-secreted NMI activates NF-kappa-B signaling in adjacent macrophages through Toll-like receptor 4/TLR4 binding and activation, thereby inducing NF-kappa-B translocation from the cytoplasm into the nucleus which promotes the release of pro-inflammatory cytokines. The chain is N-myc-interactor from Homo sapiens (Human).